A 323-amino-acid chain; its full sequence is Small ribosomal subunit protein uS2 (323 aa).

The tract at residues 295-323 (VVNRDRAGFNKKQPKAEEAAKPAEKKAEK) is disordered.

It belongs to the universal ribosomal protein uS2 family.

In Mycoplasmoides gallisepticum (strain R(low / passage 15 / clone 2)) (Mycoplasma gallisepticum), this protein is Small ribosomal subunit protein uS2.